Here is a 494-residue protein sequence, read N- to C-terminus: UDP-N-acetylmuramate--L-alanine ligase (494 aa).

140–146 contacts ATP; that stretch reads GTHGKTT.

It belongs to the MurCDEF family.

The protein resides in the cytoplasm. It carries out the reaction UDP-N-acetyl-alpha-D-muramate + L-alanine + ATP = UDP-N-acetyl-alpha-D-muramoyl-L-alanine + ADP + phosphate + H(+). It participates in cell wall biogenesis; peptidoglycan biosynthesis. In terms of biological role, cell wall formation. The sequence is that of UDP-N-acetylmuramate--L-alanine ligase from Trichormus variabilis (strain ATCC 29413 / PCC 7937) (Anabaena variabilis).